The primary structure comprises 118 residues: Large ribosomal subunit protein uL22 (118 aa).

It belongs to the universal ribosomal protein uL22 family. Part of the 50S ribosomal subunit.

This protein binds specifically to 23S rRNA; its binding is stimulated by other ribosomal proteins, e.g. L4, L17, and L20. It is important during the early stages of 50S assembly. It makes multiple contacts with different domains of the 23S rRNA in the assembled 50S subunit and ribosome. In terms of biological role, the globular domain of the protein is located near the polypeptide exit tunnel on the outside of the subunit, while an extended beta-hairpin is found that lines the wall of the exit tunnel in the center of the 70S ribosome. The sequence is that of Large ribosomal subunit protein uL22 from Leuconostoc citreum (strain KM20).